Consider the following 345-residue polypeptide: Putative pyridoxal reductase (345 aa).

Tyr-60 functions as the Proton donor in the catalytic mechanism.

This sequence belongs to the aldo/keto reductase family.

The protein localises to the cytoplasm. Its subcellular location is the nucleus. It catalyses the reaction pyridoxine + NADP(+) = pyridoxal + NADPH + H(+). It participates in cofactor degradation; B6 vitamer degradation; pyridoxal from pyridoxine (dehydrogenase route): step 1/1. Its function is as follows. Catalyzes the reduction of pyridoxal (PL) with NADPH and oxidation of pyridoxine (PN) with NADP(+). The protein is Putative pyridoxal reductase of Saccharomyces cerevisiae (strain ATCC 204508 / S288c) (Baker's yeast).